A 211-amino-acid chain; its full sequence is Protein-L-isoaspartate O-methyltransferase (211 aa).

S60 is an active-site residue.

The protein belongs to the methyltransferase superfamily. L-isoaspartyl/D-aspartyl protein methyltransferase family.

It localises to the cytoplasm. The catalysed reaction is [protein]-L-isoaspartate + S-adenosyl-L-methionine = [protein]-L-isoaspartate alpha-methyl ester + S-adenosyl-L-homocysteine. In terms of biological role, catalyzes the methyl esterification of L-isoaspartyl residues in peptides and proteins that result from spontaneous decomposition of normal L-aspartyl and L-asparaginyl residues. It plays a role in the repair and/or degradation of damaged proteins. The sequence is that of Protein-L-isoaspartate O-methyltransferase from Pseudomonas paraeruginosa (strain DSM 24068 / PA7) (Pseudomonas aeruginosa (strain PA7)).